We begin with the raw amino-acid sequence, 150 residues long: Endoribonuclease YbeY (150 aa).

3 residues coordinate Zn(2+): histidine 112, histidine 116, and histidine 122.

This sequence belongs to the endoribonuclease YbeY family. The cofactor is Zn(2+).

The protein localises to the cytoplasm. Its function is as follows. Single strand-specific metallo-endoribonuclease involved in late-stage 70S ribosome quality control and in maturation of the 3' terminus of the 16S rRNA. The polypeptide is Endoribonuclease YbeY (Geobacter sulfurreducens (strain ATCC 51573 / DSM 12127 / PCA)).